Consider the following 118-residue polypeptide: MKPRPFKEEFTLEERAKESAAMIASYPDRIPVIVEKFSRSNLPEMEKRKYLVPCNMPVGQFIFILRSRLHLSPGTALFVFVNNTLPQTAQLMGSVYESYKDEGDGFLYLCYSSEKTFG.

The Phosphatidylethanolamine amidated glycine moiety is linked to residue Gly-118.

Belongs to the ATG8 family. As to quaternary structure, interacts with ATG4. Post-translationally, the C-terminal Gly is amidated with phosphatidylethanolamine by an activating system similar to that for ubiquitin.

The protein localises to the cytoplasmic vesicle. It is found in the autophagosome membrane. It localises to the vacuole membrane. The protein resides in the cytoplasm. Its subcellular location is the cytoskeleton. Functionally, ubiquitin-like modifier involved in autophagosomes formation. May mediate the delivery of the autophagosomes to the vacuole via the microtubule cytoskeleton. The sequence is that of Autophagy-related protein 8D (ATG8D) from Oryza sativa subsp. japonica (Rice).